Consider the following 276-residue polypeptide: Small ribosomal subunit protein uS2 (276 aa).

Positions 254–276 are disordered; it reads LAGATAAAPAEGAVATETTPTEG. Residues 255 to 276 show a composition bias toward low complexity; it reads AGATAAAPAEGAVATETTPTEG.

Belongs to the universal ribosomal protein uS2 family.

In Mycobacterium ulcerans (strain Agy99), this protein is Small ribosomal subunit protein uS2.